The primary structure comprises 288 residues: Protease HtpX homolog (288 aa).

2 consecutive transmembrane segments (helical) span residues 1–21 and 23–43; these read MHTI…LLAG and IIGG…MNFF. Residue His-130 coordinates Zn(2+). Glu-131 is an active-site residue. His-134 provides a ligand contact to Zn(2+). Transmembrane regions (helical) follow at residues 140–160 and 175–195; these read ILIS…AEMA and IGGL…AMII. Glu-204 contributes to the Zn(2+) binding site.

It belongs to the peptidase M48B family. Zn(2+) serves as cofactor.

It localises to the cell inner membrane. The sequence is that of Protease HtpX homolog from Persephonella marina (strain DSM 14350 / EX-H1).